The chain runs to 360 residues: Mitogen-activated protein kinase 14 (360 aa).

Position 2 is an N-acetylserine (Ser2). Ser2 bears the Phosphoserine mark. Position 16 is a phosphothreonine (Thr16). The Protein kinase domain occupies 24-308 (YQNLSPVGSG…AAQALAHAYF (285 aa)). ATP-binding positions include 30–38 (VGSGAYGSV) and Lys53. Lys53 is modified (N6-acetyllysine). Asp150 functions as the Proton acceptor in the catalytic mechanism. Lys152 carries the N6-acetyllysine modification. Thr180 bears the Phosphothreonine mark. A TXY motif is present at residues 180–182 (TGY). Residue Tyr182 is modified to Phosphotyrosine. Tyr323 carries the phosphotyrosine; by ZAP70 modification.

Belongs to the protein kinase superfamily. CMGC Ser/Thr protein kinase family. MAP kinase subfamily. Component of a signaling complex containing at least AKAP13, PKN1, MAPK14, ZAK and MAP2K3. Within this complex, AKAP13 interacts directly with PKN1, which in turn recruits MAPK14, MAP2K3 and ZAK. Binds to a kinase interaction motif within the protein tyrosine phosphatase, PTPRR. This interaction retains MAPK14 in the cytoplasm and prevents nuclear accumulation. Interacts with SPAG9 and GADD45A. Interacts with CDC25B, CDC25C, DUSP1, DUSP10, DUSP16, NP60, SUPT20H and TAB1. Interacts with casein kinase II subunits CSNK2A1 and CSNK2B. Interacts with PPM1D. Interacts with CDK5RAP3; recruits PPM1D to MAPK14 and may regulate its dephosphorylation. Interacts with DUSP2; this interaction does not lead to catalytic activation of DUSP2 and dephosphrylation of MAPK14. Mg(2+) serves as cofactor. In terms of processing, dually phosphorylated on Thr-180 and Tyr-182 by the MAP2Ks MAP2K3/MKK3, MAP2K4/MKK4 and MAP2K6/MKK6 in response to inflammatory cytokines, environmental stress or growth factors, which activates the enzyme. Dual phosphorylation can also be mediated by TAB1-mediated autophosphorylation. TCR engagement in T-cells also leads to Tyr-323 phosphorylation by ZAP70. Dephosphorylated and inactivated by DUPS1, DUSP10 and DUSP16. PPM1D also mediates dephosphorylation and inactivation of MAPK14. Post-translationally, acetylated at Lys-53 and Lys-152 by KAT2B and EP300. Acetylation at Lys-53 increases the affinity for ATP and enhances kinase activity. Lys-53 and Lys-152 are deacetylated by HDAC3. Ubiquitinated. Ubiquitination leads to degradation by the proteasome pathway.

The protein localises to the cytoplasm. It is found in the nucleus. The catalysed reaction is L-seryl-[protein] + ATP = O-phospho-L-seryl-[protein] + ADP + H(+). It carries out the reaction L-threonyl-[protein] + ATP = O-phospho-L-threonyl-[protein] + ADP + H(+). Its activity is regulated as follows. Activated by cell stresses such as DNA damage, heat shock, osmotic shock, anisomycin and sodium arsenite, as well as pro-inflammatory stimuli such as bacterial lipopolysaccharide (LPS) and interleukin-1. Activation occurs through dual phosphorylation of Thr-180 and Tyr-182 by either of two dual specificity kinases, MAP2K3/MKK3 or MAP2K6/MKK6, and potentially also MAP2K4/MKK4, as well as by TAB1-mediated autophosphorylation. MAPK14 phosphorylated on both Thr-180 and Tyr-182 is 10-20-fold more active than MAPK14 phosphorylated only on Thr-180, whereas MAPK14 phosphorylated on Tyr-182 alone is inactive. whereas Thr-180 is necessary for catalysis, Tyr-182 may be required for auto-activation and substrate recognition. Phosphorylated at Tyr-323 by ZAP70 in an alternative activation pathway in response to TCR signaling in T-cells. This alternative pathway is inhibited by GADD45A. Inhibited by dual specificity phosphatases, such as DUSP1, DUSP10, and DUSP16. Specifically inhibited by the binding of pyridinyl-imidazole compounds, which are cytokine-suppressive anti-inflammatory drugs (CSAID). SB203580 is an inhibitor of MAPK14. Serine/threonine kinase which acts as an essential component of the MAP kinase signal transduction pathway. MAPK14 is one of the four p38 MAPKs which play an important role in the cascades of cellular responses evoked by extracellular stimuli such as pro-inflammatory cytokines or physical stress leading to direct activation of transcription factors. Accordingly, p38 MAPKs phosphorylate a broad range of proteins and it has been estimated that they may have approximately 200 to 300 substrates each. Some of the targets are downstream kinases which are activated through phosphorylation and further phosphorylate additional targets. RPS6KA5/MSK1 and RPS6KA4/MSK2 can directly phosphorylate and activate transcription factors such as CREB1, ATF1, the NF-kappa-B isoform RELA/NFKB3, STAT1 and STAT3, but can also phosphorylate histone H3 and the nucleosomal protein HMGN1. RPS6KA5/MSK1 and RPS6KA4/MSK2 play important roles in the rapid induction of immediate-early genes in response to stress or mitogenic stimuli, either by inducing chromatin remodeling or by recruiting the transcription machinery. On the other hand, two other kinase targets, MAPKAPK2/MK2 and MAPKAPK3/MK3, participate in the control of gene expression mostly at the post-transcriptional level, by phosphorylating ZFP36 (tristetraprolin) and ELAVL1, and by regulating EEF2K, which is important for the elongation of mRNA during translation. MKNK1/MNK1 and MKNK2/MNK2, two other kinases activated by p38 MAPKs, regulate protein synthesis by phosphorylating the initiation factor EIF4E2. MAPK14 also interacts with casein kinase II, leading to its activation through autophosphorylation and further phosphorylation of TP53/p53. In the cytoplasm, the p38 MAPK pathway is an important regulator of protein turnover. For example, CFLAR is an inhibitor of TNF-induced apoptosis whose proteasome-mediated degradation is regulated by p38 MAPK phosphorylation. In a similar way, MAPK14 phosphorylates the ubiquitin ligase SIAH2, regulating its activity towards EGLN3. MAPK14 may also inhibit the lysosomal degradation pathway of autophagy by interfering with the intracellular trafficking of the transmembrane protein ATG9. Another function of MAPK14 is to regulate the endocytosis of membrane receptors by different mechanisms that impinge on the small GTPase RAB5A. In addition, clathrin-mediated EGFR internalization induced by inflammatory cytokines and UV irradiation depends on MAPK14-mediated phosphorylation of EGFR itself as well as of RAB5A effectors. Ectodomain shedding of transmembrane proteins is regulated by p38 MAPKs as well. In response to inflammatory stimuli, p38 MAPKs phosphorylate the membrane-associated metalloprotease ADAM17. Such phosphorylation is required for ADAM17-mediated ectodomain shedding of TGF-alpha family ligands, which results in the activation of EGFR signaling and cell proliferation. Another p38 MAPK substrate is FGFR1. FGFR1 can be translocated from the extracellular space into the cytosol and nucleus of target cells, and regulates processes such as rRNA synthesis and cell growth. FGFR1 translocation requires p38 MAPK activation. In the nucleus, many transcription factors are phosphorylated and activated by p38 MAPKs in response to different stimuli. Classical examples include ATF1, ATF2, ATF6, ELK1, PTPRH, DDIT3, TP53/p53 and MEF2C and MEF2A. The p38 MAPKs are emerging as important modulators of gene expression by regulating chromatin modifiers and remodelers. The promoters of several genes involved in the inflammatory response, such as IL6, IL8 and IL12B, display a p38 MAPK-dependent enrichment of histone H3 phosphorylation on 'Ser-10' (H3S10ph) in LPS-stimulated myeloid cells. This phosphorylation enhances the accessibility of the cryptic NF-kappa-B-binding sites marking promoters for increased NF-kappa-B recruitment. Phosphorylates CDC25B and CDC25C which is required for binding to 14-3-3 proteins and leads to initiation of a G2 delay after ultraviolet radiation. Phosphorylates TIAR following DNA damage, releasing TIAR from GADD45A mRNA and preventing mRNA degradation. The p38 MAPKs may also have kinase-independent roles, which are thought to be due to the binding to targets in the absence of phosphorylation. Protein O-Glc-N-acylation catalyzed by the OGT is regulated by MAPK14, and, although OGT does not seem to be phosphorylated by MAPK14, their interaction increases upon MAPK14 activation induced by glucose deprivation. This interaction may regulate OGT activity by recruiting it to specific targets such as neurofilament H, stimulating its O-Glc-N-acylation. Required in mid-fetal development for the growth of embryo-derived blood vessels in the labyrinth layer of the placenta. Also plays an essential role in developmental and stress-induced erythropoiesis, through regulation of EPO gene expression. Phosphorylates S100A9 at 'Thr-113'. In Rattus norvegicus (Rat), this protein is Mitogen-activated protein kinase 14.